Here is a 427-residue protein sequence, read N- to C-terminus: Interleukin-13 receptor subunit alpha-1 (427 aa).

An N-terminal signal peptide occupies residues 1–21; the sequence is MEWPARLCGLWALLLCAGGGG. Over 22-343 the chain is Extracellular; sequence GGGGAAPTET…MSIGKKRNST (322 aa). 3 consecutive Fibronectin type-III domains span residues 34–123, 128–226, and 227–339; these read PVTN…PPEG, AVTE…TSRV, and KPDP…IGKK. N-linked (GlcNAc...) asparagine glycosylation is found at N37 and N61. 3 disulfides stabilise this stretch: C62-C102, C95-C117, and C134-C144. N-linked (GlcNAc...) asparagine glycosylation is found at N105, N138, and N157. C173 and C185 are joined by a disulfide. Residues N235, N265, N293, N329, and N341 are each glycosylated (N-linked (GlcNAc...) asparagine). Intrachain disulfides connect C257–C320 and C282–C296. The short motif at 327–331 is the WSXWS motif element; the sequence is WSNWS. A helical membrane pass occupies residues 344 to 367; that stretch reads LYITMLLIVPVIVAGAIIVLLLYL. Topologically, residues 368–427 are cytoplasmic; it reads KRLKIIIFPPIPDPGKIFKEMFGDQNDDTLHWKKYDIYEKQTKEETDSVVLIENLKKASQ. The short motif at 374-382 is the Box 1 motif element; that stretch reads IFPPIPDPG.

The protein belongs to the type I cytokine receptor family. Type 5 subfamily. Interleukin-13 receptor is a complex of IL4R, IL13RA1, and possibly other components. Interacts with TRAF3IP1. Interacts with IL4. As to expression, ubiquitous. Highest levels in heart, liver, skeletal muscle and ovary; lowest levels in brain, lung and kidney. Also found in B-cells, T-cells and endothelial cells.

It is found in the membrane. In terms of biological role, binds with low affinity to interleukin-13 (IL13). Together with IL4RA can form a functional receptor for IL13. Also serves as an alternate accessory protein to the common cytokine receptor gamma chain for interleukin-4 (IL4) signaling, but cannot replace the function of IL2RG in allowing enhanced interleukin-2 (IL2) binding activity. The polypeptide is Interleukin-13 receptor subunit alpha-1 (IL13RA1) (Homo sapiens (Human)).